The following is a 202-amino-acid chain: N-(5'-phosphoribosyl)anthranilate isomerase (202 aa).

The protein belongs to the TrpF family.

The catalysed reaction is N-(5-phospho-beta-D-ribosyl)anthranilate = 1-(2-carboxyphenylamino)-1-deoxy-D-ribulose 5-phosphate. It participates in amino-acid biosynthesis; L-tryptophan biosynthesis; L-tryptophan from chorismate: step 3/5. In Listeria welshimeri serovar 6b (strain ATCC 35897 / DSM 20650 / CCUG 15529 / CIP 8149 / NCTC 11857 / SLCC 5334 / V8), this protein is N-(5'-phosphoribosyl)anthranilate isomerase.